Consider the following 142-residue polypeptide: Large ribosomal subunit protein uL13 (142 aa).

This sequence belongs to the universal ribosomal protein uL13 family. In terms of assembly, part of the 50S ribosomal subunit.

Functionally, this protein is one of the early assembly proteins of the 50S ribosomal subunit, although it is not seen to bind rRNA by itself. It is important during the early stages of 50S assembly. The chain is Large ribosomal subunit protein uL13 from Akkermansia muciniphila (strain ATCC BAA-835 / DSM 22959 / JCM 33894 / BCRC 81048 / CCUG 64013 / CIP 107961 / Muc).